A 199-amino-acid chain; its full sequence is ATP-dependent Clp protease proteolytic subunit 2 (199 aa).

Catalysis depends on serine 98, which acts as the Nucleophile. Histidine 123 is a catalytic residue.

Belongs to the peptidase S14 family. As to quaternary structure, fourteen ClpP subunits assemble into 2 heptameric rings which stack back to back to give a disk-like structure with a central cavity, resembling the structure of eukaryotic proteasomes.

The protein resides in the cytoplasm. It catalyses the reaction Hydrolysis of proteins to small peptides in the presence of ATP and magnesium. alpha-casein is the usual test substrate. In the absence of ATP, only oligopeptides shorter than five residues are hydrolyzed (such as succinyl-Leu-Tyr-|-NHMec, and Leu-Tyr-Leu-|-Tyr-Trp, in which cleavage of the -Tyr-|-Leu- and -Tyr-|-Trp bonds also occurs).. Cleaves peptides in various proteins in a process that requires ATP hydrolysis. Has a chymotrypsin-like activity. Plays a major role in the degradation of misfolded proteins. This is ATP-dependent Clp protease proteolytic subunit 2 from Corynebacterium diphtheriae (strain ATCC 700971 / NCTC 13129 / Biotype gravis).